Consider the following 321-residue polypeptide: Probable cell division protein WhiA (321 aa).

A DNA-binding region (H-T-H motif) is located at residues 275-308; that stretch reads SLDELGRLADPPMTKDAVAGRIRRLLAMADKRAA.

It belongs to the WhiA family.

Functionally, involved in cell division and chromosome segregation. The protein is Probable cell division protein WhiA of Micrococcus luteus (strain ATCC 4698 / DSM 20030 / JCM 1464 / CCM 169 / CCUG 5858 / IAM 1056 / NBRC 3333 / NCIMB 9278 / NCTC 2665 / VKM Ac-2230) (Micrococcus lysodeikticus).